Consider the following 483-residue polypeptide: ATP synthase subunit beta (483 aa).

162-169 (GGAGVGKT) contacts ATP.

This sequence belongs to the ATPase alpha/beta chains family. F-type ATPases have 2 components, CF(1) - the catalytic core - and CF(0) - the membrane proton channel. CF(1) has five subunits: alpha(3), beta(3), gamma(1), delta(1), epsilon(1). CF(0) has four main subunits: a(1), b(1), b'(1) and c(9-12).

It localises to the cellular thylakoid membrane. The enzyme catalyses ATP + H2O + 4 H(+)(in) = ADP + phosphate + 5 H(+)(out). Its function is as follows. Produces ATP from ADP in the presence of a proton gradient across the membrane. The catalytic sites are hosted primarily by the beta subunits. This is ATP synthase subunit beta from Synechocystis sp. (strain ATCC 27184 / PCC 6803 / Kazusa).